Reading from the N-terminus, the 472-residue chain is NADH-quinone oxidoreductase subunit N 2 (472 aa).

The next 13 membrane-spanning stretches (helical) occupy residues 3-23 (WMSFAPELITLTSALWFLLLS), 34-54 (HVAALVLSALGLAACLASVGA), 67-87 (LFSQVFKVLLAAGLFLIVTLC), 106-126 (FVCTLAMMLLVGANHFLVVFI), 156-176 (FLVGIFASGVMIFGLALLYGA), 198-218 (VVIGLLLTLSGFFFKLAVFPF), 233-253 (VSAYIATASKVAAIGVLVRVI), 263-283 (LVHVLAVLSVVSMTVGNLAAI), 291-311 (LLAYSTVAHAGYVLIGVLSMN), 317-337 (AAVFYAFALLVMKFTAFLVLV), 360-380 (ILALALMVSLFSLAGIPPTVG), 398-418 (TLVLIAMINVVISLYYYLLVI), and 441-461 (LLSGVLVIAMVAAGFFPNQII).

Belongs to the complex I subunit 2 family. In terms of assembly, NDH-1 is composed of 14 different subunits. Subunits NuoA, H, J, K, L, M, N constitute the membrane sector of the complex.

It localises to the cell inner membrane. It carries out the reaction a quinone + NADH + 5 H(+)(in) = a quinol + NAD(+) + 4 H(+)(out). Functionally, NDH-1 shuttles electrons from NADH, via FMN and iron-sulfur (Fe-S) centers, to quinones in the respiratory chain. The immediate electron acceptor for the enzyme in this species is believed to be ubiquinone. Couples the redox reaction to proton translocation (for every two electrons transferred, four hydrogen ions are translocated across the cytoplasmic membrane), and thus conserves the redox energy in a proton gradient. The polypeptide is NADH-quinone oxidoreductase subunit N 2 (Syntrophobacter fumaroxidans (strain DSM 10017 / MPOB)).